Consider the following 204-residue polypeptide: Guanylate kinase (204 aa).

In terms of domain architecture, Guanylate kinase-like spans 16-196 (AKVIIFSAPS…AKAHALKVIK (181 aa)). An ATP-binding site is contributed by 23–30 (APSGSGKS).

This sequence belongs to the guanylate kinase family.

It is found in the cytoplasm. It carries out the reaction GMP + ATP = GDP + ADP. Essential for recycling GMP and indirectly, cGMP. The polypeptide is Guanylate kinase (Bacteroides fragilis (strain ATCC 25285 / DSM 2151 / CCUG 4856 / JCM 11019 / LMG 10263 / NCTC 9343 / Onslow / VPI 2553 / EN-2)).